Consider the following 179-residue polypeptide: tRNA (cytidine(56)-2'-O)-methyltransferase (179 aa).

Residues L82, 110–114, and 128–135 contribute to the S-adenosyl-L-methionine site; these read GAEKV and VGNQPHSE.

This sequence belongs to the aTrm56 family. As to quaternary structure, homodimer.

It is found in the cytoplasm. The catalysed reaction is cytidine(56) in tRNA + S-adenosyl-L-methionine = 2'-O-methylcytidine(56) in tRNA + S-adenosyl-L-homocysteine + H(+). Functionally, specifically catalyzes the AdoMet-dependent 2'-O-ribose methylation of cytidine at position 56 in tRNAs. This Methanocaldococcus jannaschii (strain ATCC 43067 / DSM 2661 / JAL-1 / JCM 10045 / NBRC 100440) (Methanococcus jannaschii) protein is tRNA (cytidine(56)-2'-O)-methyltransferase.